The primary structure comprises 702 residues: 1,4-alpha-glucan-branching enzyme (702 aa).

The residue at position 2 (Ala2) is an N-acetylalanine. Residues 62-63 (NE) and 91-93 (WAP) each bind substrate. Trp107 contacts (1,4-alpha-D-glucosyl)n. 118-121 (EYGK) lines the substrate pocket. Lys143 contacts (1,4-alpha-D-glucosyl)n. Tyr173 carries the post-translational modification Phosphotyrosine. 333 to 336 (EVLR) lines the substrate pocket. Asp357 (nucleophile) is an active-site residue. Residue Glu412 is the Proton donor of the active site.

The protein belongs to the glycosyl hydrolase 13 family. GlgB subfamily. Monomer.

The enzyme catalyses Transfers a segment of a (1-&gt;4)-alpha-D-glucan chain to a primary hydroxy group in a similar glucan chain.. The protein operates within glycan biosynthesis; glycogen biosynthesis. In terms of biological role, glycogen-branching enzyme participates in the glycogen biosynthetic process along with glycogenin and glycogen synthase. Generates alpha-1,6-glucosidic branches from alpha-1,4-linked glucose chains, to increase solubility of the glycogen polymer. The chain is 1,4-alpha-glucan-branching enzyme (Gbe1) from Mus musculus (Mouse).